Reading from the N-terminus, the 120-residue chain is Ribonuclease P protein component (120 aa).

It belongs to the RnpA family. As to quaternary structure, consists of a catalytic RNA component (M1 or rnpB) and a protein subunit.

It catalyses the reaction Endonucleolytic cleavage of RNA, removing 5'-extranucleotides from tRNA precursor.. Its function is as follows. RNaseP catalyzes the removal of the 5'-leader sequence from pre-tRNA to produce the mature 5'-terminus. It can also cleave other RNA substrates such as 4.5S RNA. The protein component plays an auxiliary but essential role in vivo by binding to the 5'-leader sequence and broadening the substrate specificity of the ribozyme. The chain is Ribonuclease P protein component from Dictyoglomus thermophilum (strain ATCC 35947 / DSM 3960 / H-6-12).